Consider the following 260-residue polypeptide: Adenosine 5'-phosphosulfate reductase (260 aa).

4 residues coordinate [4Fe-4S] cluster: C130, C131, C213, and C216. Residue C241 is the Nucleophile; cysteine thiosulfonate intermediate of the active site.

Belongs to the PAPS reductase family. CysH subfamily. It depends on [4Fe-4S] cluster as a cofactor.

The protein localises to the cytoplasm. The enzyme catalyses [thioredoxin]-disulfide + sulfite + AMP + 2 H(+) = adenosine 5'-phosphosulfate + [thioredoxin]-dithiol. It functions in the pathway sulfur metabolism; hydrogen sulfide biosynthesis; sulfite from sulfate. Functionally, catalyzes the formation of sulfite from adenosine 5'-phosphosulfate (APS) using thioredoxin as an electron donor. This is Adenosine 5'-phosphosulfate reductase from Agrobacterium fabrum (strain C58 / ATCC 33970) (Agrobacterium tumefaciens (strain C58)).